The sequence spans 323 residues: E3 ubiquitin-protein ligase makorin (323 aa).

C3H1-type zinc fingers lie at residues 1–28 (MSDRILCKFFVHGSCLKGENCEFSHDSK) and 29–56 (DPPNNVCTFYQKRICLYGSRCRYDHVRA). A compositionally biased stretch (low complexity) spans 62–74 (LSSDSESLDRSIS). A disordered region spans residues 62-92 (LSSDSESLDRSISTTPSRHLQQQGDNNDGDK). Residues 75–87 (TTPSRHLQQQGDN) show a composition bias toward polar residues. The C3H1-type 3 zinc finger occupies 101–128 (PREYPICSFAAAGDCPRGNQCPHMHGDL). Residues 129–158 (CNTCGKKCLHPFRPEEREEHTKECEKKQKH) are makorin-type Cys-His. The segment at 170–228 (CSVCLDRILSKATPGERKFGLLTECDHPFCIQCIRNWRSSAPVSGMDVNSTLRACPICR) adopts an RING-type zinc-finger fold. The C3H1-type 4 zinc finger occupies 257–286 (KLRSIDCKHFNFGNGNCPFGASCFYKHAYS).

The catalysed reaction is S-ubiquitinyl-[E2 ubiquitin-conjugating enzyme]-L-cysteine + [acceptor protein]-L-lysine = [E2 ubiquitin-conjugating enzyme]-L-cysteine + N(6)-ubiquitinyl-[acceptor protein]-L-lysine.. The protein operates within protein modification; protein ubiquitination. E3 ubiquitin ligase catalyzing the covalent attachment of ubiquitin moieties onto substrate proteins. This chain is E3 ubiquitin-protein ligase makorin (MKRN), found in Arabidopsis thaliana (Mouse-ear cress).